We begin with the raw amino-acid sequence, 188 residues long: Ribosomal RNA small subunit methyltransferase G (188 aa).

S-adenosyl-L-methionine contacts are provided by residues G69, F74, 119–120, and R134; that span reads VQ.

This sequence belongs to the methyltransferase superfamily. RNA methyltransferase RsmG family.

Its subcellular location is the cytoplasm. The catalysed reaction is guanosine(527) in 16S rRNA + S-adenosyl-L-methionine = N(7)-methylguanosine(527) in 16S rRNA + S-adenosyl-L-homocysteine. In terms of biological role, specifically methylates the N7 position of guanine in position 527 of 16S rRNA. This chain is Ribosomal RNA small subunit methyltransferase G, found in Campylobacter jejuni subsp. jejuni serotype O:23/36 (strain 81-176).